The following is an 82-amino-acid chain: RNA-binding protein KhpA (82 aa).

The KH domain occupies Ser35–Asp82.

Belongs to the KhpA RNA-binding protein family. As to quaternary structure, forms a complex with KhpB.

The protein resides in the cytoplasm. Its function is as follows. A probable RNA chaperone. Forms a complex with KhpB which binds to cellular RNA and controls its expression. Plays a role in peptidoglycan (PG) homeostasis and cell length regulation. The chain is RNA-binding protein KhpA from Borreliella burgdorferi (strain ATCC 35210 / DSM 4680 / CIP 102532 / B31) (Borrelia burgdorferi).